The sequence spans 264 residues: TLC domain-containing protein 4-B (264 aa).

Transmembrane regions (helical) follow at residues 6 to 26 (VYVV…VSPV), 50 to 70 (LVST…LWYD), 84 to 104 (LVKL…LLLA), 110 to 130 (MGDV…GYVL), 169 to 189 (LVVA…IAVM), and 210 to 230 (LAIQ…NIIW). In terms of domain architecture, TLC spans 41-243 (NKLNDWNSRL…IARGCYKVIT (203 aa)).

The protein belongs to the TLCD4 family.

It localises to the membrane. In Danio rerio (Zebrafish), this protein is TLC domain-containing protein 4-B (tlcd4b).